Reading from the N-terminus, the 125-residue chain is Cholecystokinin-8 (125 aa).

Positions Met-1–Gly-20 are cleaved as a signal peptide. The propeptide occupies Gln-21–Arg-105. Tyr-107 is modified (sulfotyrosine). Phe-113 is subject to Phenylalanine amide. Residues Gly-114–Ser-125 constitute a propeptide that is removed on maturation.

This sequence belongs to the gastrin/cholecystokinin family.

It is found in the secreted. Hypotensive neuropeptide that binds cholecystokinin receptors (CCKAR). In Python molurus (Indian python), this protein is Cholecystokinin-8 (CCK).